The chain runs to 160 residues: Cytochrome b6-f complex subunit 4 (160 aa).

Transmembrane regions (helical) follow at residues 36–56, 95–115, and 131–151; these read LLYI…GLSV, LLGV…PFIE, and TVFL…TFPI.

It belongs to the cytochrome b family. PetD subfamily. As to quaternary structure, the 4 large subunits of the cytochrome b6-f complex are cytochrome b6, subunit IV (17 kDa polypeptide, petD), cytochrome f and the Rieske protein, while the 4 small subunits are petG, petL, petM and petN. The complex functions as a dimer.

It localises to the plastid. The protein localises to the chloroplast thylakoid membrane. Its function is as follows. Component of the cytochrome b6-f complex, which mediates electron transfer between photosystem II (PSII) and photosystem I (PSI), cyclic electron flow around PSI, and state transitions. The sequence is that of Cytochrome b6-f complex subunit 4 from Stigeoclonium helveticum (Green alga).